An 804-amino-acid polypeptide reads, in one-letter code: Ribonucleoside-diphosphate reductase large subunit-like protein (804 aa).

This sequence belongs to the ribonucleoside diphosphate reductase large chain family. In terms of assembly, the genome of human herpesvirus-6 does not code for a ribonucleotide reductase small subunit.

The protein localises to the virion. It localises to the host cytoplasm. Does not possess a ribonucleotide reductase activity. Betaherpesviruses probably use another strategy to expand the dNTP pool in a quiescent host cell. The protein is Ribonucleoside-diphosphate reductase large subunit-like protein of Human herpesvirus 6B (strain Z29) (HHV-6 variant B).